We begin with the raw amino-acid sequence, 619 residues long: Chaperone protein HscA homolog (619 aa).

This sequence belongs to the heat shock protein 70 family.

Functionally, chaperone involved in the maturation of iron-sulfur cluster-containing proteins. Has a low intrinsic ATPase activity which is markedly stimulated by HscB. The sequence is that of Chaperone protein HscA homolog from Acinetobacter baumannii (strain ATCC 17978 / DSM 105126 / CIP 53.77 / LMG 1025 / NCDC KC755 / 5377).